The chain runs to 191 residues: Inosine triphosphate pyrophosphatase (191 aa).

Position 9–14 (9–14 (TGNAKK)) interacts with ITP. Position 39 (glutamate 39) interacts with Mg(2+). Residues lysine 51, 67–68 (DT), lysine 84, 143–146 (FGWD), lysine 166, and 171–172 (HR) contribute to the ITP site.

The protein belongs to the HAM1 NTPase family. As to quaternary structure, homodimer. The cofactor is Mg(2+). Requires Mn(2+) as cofactor.

The protein localises to the cytoplasm. It catalyses the reaction ITP + H2O = IMP + diphosphate + H(+). The enzyme catalyses dITP + H2O = dIMP + diphosphate + H(+). The catalysed reaction is XTP + H2O = XMP + diphosphate + H(+). Functionally, pyrophosphatase that hydrolyzes non-canonical purine nucleotides such as inosine triphosphate (ITP), deoxyinosine triphosphate (dITP) or xanthosine 5'-triphosphate (XTP) to their respective monophosphate derivatives. The enzyme does not distinguish between the deoxy- and ribose forms. Probably excludes non-canonical purines from RNA and DNA precursor pools, thus preventing their incorporation into RNA and DNA and avoiding chromosomal lesions. The protein is Inosine triphosphate pyrophosphatase of Drosophila melanogaster (Fruit fly).